The sequence spans 159 residues: Phosphopantetheine adenylyltransferase (159 aa).

Residue Thr-10 coordinates substrate. ATP is bound by residues 10–11 (TF) and His-18. Positions 42, 74, and 88 each coordinate substrate. ATP-binding positions include 89–91 (GLR), Glu-99, and 124–130 (WSFISSS).

The protein belongs to the bacterial CoaD family. In terms of assembly, homohexamer. It depends on Mg(2+) as a cofactor.

The protein resides in the cytoplasm. It carries out the reaction (R)-4'-phosphopantetheine + ATP + H(+) = 3'-dephospho-CoA + diphosphate. It functions in the pathway cofactor biosynthesis; coenzyme A biosynthesis; CoA from (R)-pantothenate: step 4/5. Reversibly transfers an adenylyl group from ATP to 4'-phosphopantetheine, yielding dephospho-CoA (dPCoA) and pyrophosphate. The sequence is that of Phosphopantetheine adenylyltransferase from Yersinia enterocolitica serotype O:8 / biotype 1B (strain NCTC 13174 / 8081).